The following is a 2280-amino-acid chain: Protein Ycf2 (2280 aa).

1631–1638 lines the ATP pocket; that stretch reads GSIGTGRS.

This sequence belongs to the Ycf2 family.

It localises to the plastid. The protein resides in the chloroplast stroma. In terms of biological role, probable ATPase of unknown function. Its presence in a non-photosynthetic plant (Epifagus virginiana) and experiments in tobacco indicate that it has an essential function which is probably not related to photosynthesis. In Nicotiana tomentosiformis (Tobacco), this protein is Protein Ycf2.